Reading from the N-terminus, the 86-residue chain is Toxin Aam3 (86 aa).

The N-terminal stretch at 1–19 is a signal peptide; sequence MNYLVMISLALLFMIGVES. Residues 21-85 form the LCN-type CS-alpha/beta domain; it reads RDGYIAQPNN…PIKIIGQKCT (65 aa). Cystine bridges form between Cys31-Cys84, Cys35-Cys56, Cys42-Cys66, and Cys46-Cys68.

This sequence belongs to the long (4 C-C) scorpion toxin superfamily. Sodium channel inhibitor family. Alpha subfamily. In terms of processing, the C-terminal basic residue is removed by a carboxypeptidase. Expressed by the venom gland.

It is found in the secreted. Alpha toxins bind voltage-independently at site-3 of sodium channels (Nav) and inhibit the inactivation of the activated channels, thereby blocking neuronal transmission. In Androctonus amoreuxi (African fattail scorpion), this protein is Toxin Aam3.